The primary structure comprises 692 residues: MRITKPITLYRDLSYFHSLLKSCIHGEISSSPITIFRDLLRSSLTPNHFTMSIFLQATTTSFNSFKLQVEQVQTHLTKSGLDRFVYVKTSLLNLYLKKGCVTSAQMLFDEMPERDTVVWNALICGYSRNGYECDAWKLFIVMLQQGFSPSATTLVNLLPFCGQCGFVSQGRSVHGVAAKSGLELDSQVKNALISFYSKCAELGSAEVLFREMKDKSTVSWNTMIGAYSQSGLQEEAITVFKNMFEKNVEISPVTIINLLSAHVSHEPLHCLVVKCGMVNDISVVTSLVCAYSRCGCLVSAERLYASAKQDSIVGLTSIVSCYAEKGDMDIAVVYFSKTRQLCMKIDAVALVGILHGCKKSSHIDIGMSLHGYAIKSGLCTKTLVVNGLITMYSKFDDVETVLFLFEQLQETPLISWNSVISGCVQSGRASTAFEVFHQMMLTGGLLPDAITIASLLAGCSQLCCLNLGKELHGYTLRNNFENENFVCTALIDMYAKCGNEVQAESVFKSIKAPCTATWNSMISGYSLSGLQHRALSCYLEMREKGLKPDEITFLGVLSACNHGGFVDEGKICFRAMIKEFGISPTLQHYALMVGLLGRACLFTEALYLIWKMDIKPDSAVWGALLSACIIHRELEVGEYVARKMFMLDYKNGGLYVLMSNLYATEAMWDDVVRVRNMMKDNGYDGYLGVSQI.

PPR repeat units follow at residues 12–46, 47–83, 84–114, 115–149, 150–184, 185–215, 216–250, 280–314, 316–345, 346–380, 381–411, 412–447, 448–482, 483–513, 514–548, 549–584, and 585–615; these read DLSY…SLTP, NHFT…GLDR, FVYV…MPER, DTVV…GFSP, SATT…GLEL, DSQV…MKDK, STVS…NVEI, DISV…SIVG, TSIV…CMKI, DAVA…GLCT, KTLV…LQET, PLIS…GLLP, DAIT…NFEN, ENFV…IKAP, CTAT…GLKP, DEIT…GISP, and TLQH…MDIK. Positions 620–692 are type E motif; degenerate; the sequence is VWGALLSACI…YDGYLGVSQI (73 aa).

This sequence belongs to the PPR family. PCMP-E subfamily.

The polypeptide is Pentatricopeptide repeat-containing protein At2g04860 (PCMP-E74) (Arabidopsis thaliana (Mouse-ear cress)).